The sequence spans 444 residues: tRNA-2-methylthio-N(6)-dimethylallyladenosine synthase (444 aa).

Residues 8–122 enclose the MTTase N-terminal domain; that stretch reads KTFYIETFGC…LAEMLVQIES (115 aa). 6 residues coordinate [4Fe-4S] cluster: Cys17, Cys53, Cys85, Cys160, Cys164, and Cys167. Residues 146–376 enclose the Radical SAM core domain; that stretch reads RGNAHRGYIT…MEHQREIQRA (231 aa). Residues 379–444 form the TRAM domain; the sequence is RKHIGETIEV…PNSLVGELVG (66 aa).

Belongs to the methylthiotransferase family. MiaB subfamily. As to quaternary structure, monomer. It depends on [4Fe-4S] cluster as a cofactor.

The protein resides in the cytoplasm. The enzyme catalyses N(6)-dimethylallyladenosine(37) in tRNA + (sulfur carrier)-SH + AH2 + 2 S-adenosyl-L-methionine = 2-methylsulfanyl-N(6)-dimethylallyladenosine(37) in tRNA + (sulfur carrier)-H + 5'-deoxyadenosine + L-methionine + A + S-adenosyl-L-homocysteine + 2 H(+). In terms of biological role, catalyzes the methylthiolation of N6-(dimethylallyl)adenosine (i(6)A), leading to the formation of 2-methylthio-N6-(dimethylallyl)adenosine (ms(2)i(6)A) at position 37 in tRNAs that read codons beginning with uridine. The polypeptide is tRNA-2-methylthio-N(6)-dimethylallyladenosine synthase (Koribacter versatilis (strain Ellin345)).